The chain runs to 700 residues: Transketolase (700 aa).

Substrate is bound at residue His-45. Residues Thr-48, His-85, and 133 to 135 (GPL) contribute to the thiamine diphosphate site. Residue Asp-177 coordinates Mg(2+). Thiamine diphosphate-binding residues include Gly-178 and Asn-207. Mg(2+)-binding residues include Asn-207 and Ile-209. Positions 283, 378, and 405 each coordinate substrate. His-283 is a thiamine diphosphate binding site. The active-site Proton donor is the Glu-441. Position 467 (Phe-467) interacts with thiamine diphosphate. 3 residues coordinate substrate: His-491, Asp-499, and Arg-552.

Belongs to the transketolase family. In terms of assembly, homodimer. Mg(2+) serves as cofactor. It depends on Ca(2+) as a cofactor. Mn(2+) is required as a cofactor. Requires Co(2+) as cofactor. The cofactor is thiamine diphosphate.

The catalysed reaction is D-sedoheptulose 7-phosphate + D-glyceraldehyde 3-phosphate = aldehydo-D-ribose 5-phosphate + D-xylulose 5-phosphate. In terms of biological role, catalyzes the transfer of a two-carbon ketol group from a ketose donor to an aldose acceptor, via a covalent intermediate with the cofactor thiamine pyrophosphate. The protein is Transketolase (tkt) of Mycobacterium bovis (strain ATCC BAA-935 / AF2122/97).